The sequence spans 370 residues: 3-isopropylmalate dehydrogenase (370 aa).

77-90 lines the NAD(+) pocket; that stretch reads GPKWDAVPYEVRPE. Arg-97, Arg-107, Arg-135, and Asp-226 together coordinate substrate. Asp-226, Asp-250, and Asp-254 together coordinate Mg(2+). An NAD(+)-binding site is contributed by 290–302; it reads GSAPDIAGTGVAN.

It belongs to the isocitrate and isopropylmalate dehydrogenases family. LeuB type 1 subfamily. As to quaternary structure, homodimer. It depends on Mg(2+) as a cofactor. The cofactor is Mn(2+).

It localises to the cytoplasm. It carries out the reaction (2R,3S)-3-isopropylmalate + NAD(+) = 4-methyl-2-oxopentanoate + CO2 + NADH. It participates in amino-acid biosynthesis; L-leucine biosynthesis; L-leucine from 3-methyl-2-oxobutanoate: step 3/4. Functionally, catalyzes the oxidation of 3-carboxy-2-hydroxy-4-methylpentanoate (3-isopropylmalate) to 3-carboxy-4-methyl-2-oxopentanoate. The product decarboxylates to 4-methyl-2 oxopentanoate. The chain is 3-isopropylmalate dehydrogenase from Rhizobium meliloti (strain 1021) (Ensifer meliloti).